The chain runs to 514 residues: 2,3-bisphosphoglycerate-independent phosphoglycerate mutase (514 aa).

Asp-14 and Ser-64 together coordinate Mn(2+). Catalysis depends on Ser-64, which acts as the Phosphoserine intermediate. Substrate is bound by residues His-125, 155–156 (RD), Arg-187, Arg-193, 263–266 (RADR), and Lys-336. Mn(2+)-binding residues include Asp-403, His-407, Asp-444, His-445, and His-463.

Belongs to the BPG-independent phosphoglycerate mutase family. In terms of assembly, monomer. Mn(2+) serves as cofactor.

It catalyses the reaction (2R)-2-phosphoglycerate = (2R)-3-phosphoglycerate. It functions in the pathway carbohydrate degradation; glycolysis; pyruvate from D-glyceraldehyde 3-phosphate: step 3/5. Functionally, catalyzes the interconversion of 2-phosphoglycerate and 3-phosphoglycerate. This Escherichia coli O1:K1 / APEC protein is 2,3-bisphosphoglycerate-independent phosphoglycerate mutase.